Here is a 210-residue protein sequence, read N- to C-terminus: High-affinity nitrate transporter 3.1 (210 aa).

Positions 1–22 are cleaved as a signal peptide; the sequence is MAIQKILFASLLICSLIQSIHG. Residues 178 to 198 form a helical membrane-spanning segment; sequence LDIASICFSVFSVVALVVFFV.

Belongs to the NAR2 family. As to quaternary structure, heterotetramer composed of two NRT2.1 and two NRT3.1. Interacts with NRT2.1 and NRT2.3. Interacts with all other NRT2 transporters, including NRT2.5. Highly expressed in roots. Detected in shoots.

It localises to the cell membrane. In terms of biological role, acts as a dual component transporter with NTR2.1. Required for high-affinity nitrate transport. Acts as a repressor of lateral root initiation. May be involved in targeting NRT2 proteins to the plasma membrane. The chain is High-affinity nitrate transporter 3.1 (NRT3.1) from Arabidopsis thaliana (Mouse-ear cress).